Consider the following 513-residue polypeptide: ATP synthase subunit alpha 2 (513 aa).

169 to 176 (GDRQVGKT) provides a ligand contact to ATP.

It belongs to the ATPase alpha/beta chains family. As to quaternary structure, F-type ATPases have 2 components, CF(1) - the catalytic core - and CF(0) - the membrane proton channel. CF(1) has five subunits: alpha(3), beta(3), gamma(1), delta(1), epsilon(1). CF(0) has three main subunits: a(1), b(2) and c(9-12). The alpha and beta chains form an alternating ring which encloses part of the gamma chain. CF(1) is attached to CF(0) by a central stalk formed by the gamma and epsilon chains, while a peripheral stalk is formed by the delta and b chains.

The protein localises to the cell inner membrane. It catalyses the reaction ATP + H2O + 4 H(+)(in) = ADP + phosphate + 5 H(+)(out). In terms of biological role, produces ATP from ADP in the presence of a proton gradient across the membrane. The alpha chain is a regulatory subunit. This is ATP synthase subunit alpha 2 from Psychromonas ingrahamii (strain DSM 17664 / CCUG 51855 / 37).